The following is a 517-amino-acid chain: UDP-N-acetylmuramyl-tripeptide synthetase (517 aa).

T48 provides a ligand contact to UDP-N-acetyl-alpha-D-muramoyl-L-alanyl-D-glutamate. 125-131 serves as a coordination point for ATP; sequence GTKGKTT. UDP-N-acetyl-alpha-D-muramoyl-L-alanyl-D-glutamate is bound by residues 169–170, S196, and R204; that span reads TT. K238 carries the post-translational modification N6-carboxylysine.

This sequence belongs to the MurCDEF family. MurE subfamily. In terms of processing, carboxylation is probably crucial for Mg(2+) binding and, consequently, for the gamma-phosphate positioning of ATP.

It localises to the cytoplasm. Its pathway is cell wall biogenesis; peptidoglycan biosynthesis. Its function is as follows. Catalyzes the addition of an amino acid to the nucleotide precursor UDP-N-acetylmuramoyl-L-alanyl-D-glutamate (UMAG) in the biosynthesis of bacterial cell-wall peptidoglycan. The protein is UDP-N-acetylmuramyl-tripeptide synthetase of Bifidobacterium longum (strain NCC 2705).